The chain runs to 455 residues: UDP-N-acetylmuramoylalanine--D-glutamate ligase (455 aa).

119–125 (GTNGKTT) is an ATP binding site.

Belongs to the MurCDEF family.

Its subcellular location is the cytoplasm. The catalysed reaction is UDP-N-acetyl-alpha-D-muramoyl-L-alanine + D-glutamate + ATP = UDP-N-acetyl-alpha-D-muramoyl-L-alanyl-D-glutamate + ADP + phosphate + H(+). The protein operates within cell wall biogenesis; peptidoglycan biosynthesis. Cell wall formation. Catalyzes the addition of glutamate to the nucleotide precursor UDP-N-acetylmuramoyl-L-alanine (UMA). In Listeria monocytogenes serotype 4b (strain F2365), this protein is UDP-N-acetylmuramoylalanine--D-glutamate ligase.